A 451-amino-acid polypeptide reads, in one-letter code: Tryptophan--tRNA ligase (451 aa).

ATP-binding positions include 10–12 (TTT) and 18–19 (GN). Positions 11–19 (TTGTPHLGN) match the 'HIGH' region motif. Asp-143 contributes to the L-tryptophan binding site. Residues 155–157 (GRD), Leu-195, and 202–206 (KMSKS) each bind ATP. Residues 202–206 (KMSKS) carry the 'KMSKS' region motif.

It belongs to the class-I aminoacyl-tRNA synthetase family. As to quaternary structure, homodimer.

Its subcellular location is the cytoplasm. The enzyme catalyses tRNA(Trp) + L-tryptophan + ATP = L-tryptophyl-tRNA(Trp) + AMP + diphosphate + H(+). In terms of biological role, catalyzes the attachment of tryptophan to tRNA(Trp). This Bordetella pertussis (strain Tohama I / ATCC BAA-589 / NCTC 13251) protein is Tryptophan--tRNA ligase.